Reading from the N-terminus, the 4835-residue chain is Midasin (4835 aa).

6 AAA-ATPase protomer regions span residues 12–161 (EVLR…PLVL), 324–689 (RSLD…HRFR), 797–1049 (MTTI…AEII), 1096–1375 (KFQD…DYIT), 1489–1738 (APTT…FGYR), and 1821–2110 (ALEA…SIDI). ATP-binding positions include 31-38 (GPSASGRT), 356-363 (GPTGIGKT), 814-821 (GTTSSGKT), 1127-1134 (GVSGAGKT), 1513-1520 (GDPGVGKS), and 1839-1846 (GSPESGKS). A linker region spans residues 2197 to 4058 (SVFIASTLNA…DGTGDQNVSK (1862 aa)). 2 disordered regions span residues 4033–4056 (DQKE…DQNV) and 4108–4523 (IEEE…LLNP). Acidic residues-rich tracts occupy residues 4109 to 4133 (EEED…QGEA), 4141 to 4150 (EDDDSAEEYS), 4226 to 4241 (ADGE…EEEQ), 4282 to 4291 (VDIDDNEASD), and 4315 to 4330 (NDEE…DQEN). A compositionally biased stretch (polar residues) spans 4331–4346 (ITDSNPDANEVGTNDQ). Basic and acidic residues-rich tracts occupy residues 4347-4360 (KQTH…RQEN), 4394-4415 (EFQR…KDEA), and 4429-4438 (VEFDDSKSGR). The segment covering 4468-4477 (HNSSCETSQS) has biased composition (polar residues). Basic and acidic residues predominate over residues 4478-4488 (SHDRPPAEHLN). In terms of domain architecture, VWFA spans 4629–4818 (QVLLAVDDSS…RHIEDLPETL (190 aa)).

The protein belongs to the midasin family. Associates with pre-60S ribosomes in the nucleoplasm.

Its subcellular location is the nucleus. It is found in the nucleolus. The protein resides in the nucleoplasm. Functionally, nuclear chaperone required for maturation and nuclear export of pre-60S ribosome subunits. Functions at successive maturation steps to remove ribosomal factors at critical transition points, first driving the exit of early pre-60S particles from the nucleolus and then driving late pre-60S particles from the nucleus. This chain is Midasin (MDN1), found in Giardia intestinalis (Giardia lamblia).